A 156-amino-acid chain; its full sequence is Ribonuclease H (156 aa).

The 142-residue stretch at Gln7–Ile148 folds into the RNase H type-1 domain. 4 residues coordinate Mg(2+): Asp16, Glu54, Asp76, and Asp140.

Belongs to the RNase H family. As to quaternary structure, monomer. The cofactor is Mg(2+).

It is found in the cytoplasm. It catalyses the reaction Endonucleolytic cleavage to 5'-phosphomonoester.. Endonuclease that specifically degrades the RNA of RNA-DNA hybrids. This Zymomonas mobilis subsp. mobilis (strain ATCC 31821 / ZM4 / CP4) protein is Ribonuclease H (rnhA).